We begin with the raw amino-acid sequence, 165 residues long: Interferon gamma (165 aa).

The first 23 residues, 1-23 (MKYTSYILAFQLCIVLGSLGCYC), serve as a signal peptide directing secretion. Pyrrolidone carboxylic acid is present on glutamine 24. N-linked (GlcNAc...) asparagine glycosylation is found at asparagine 48 and asparagine 120.

The protein belongs to the type II (or gamma) interferon family. In terms of assembly, homodimer. Interacts with IFNGR1 (via extracellular domain); this interaction promotes IFNGR1 dimerization. As to expression, released primarily from activated T lymphocytes.

It is found in the secreted. Functionally, type II interferon produced by immune cells such as T-cells and NK cells that plays crucial roles in antimicrobial, antiviral, and antitumor responses by activating effector immune cells and enhancing antigen presentation. Primarily signals through the JAK-STAT pathway after interaction with its receptor IFNGR1 to affect gene regulation. Upon IFNG binding, IFNGR1 intracellular domain opens out to allow association of downstream signaling components JAK2, JAK1 and STAT1, leading to STAT1 activation, nuclear translocation and transcription of IFNG-regulated genes. Many of the induced genes are transcription factors such as IRF1 that are able to further drive regulation of a next wave of transcription. Plays a role in class I antigen presentation pathway by inducing a replacement of catalytic proteasome subunits with immunoproteasome subunits. In turn, increases the quantity, quality, and repertoire of peptides for class I MHC loading. Increases the efficiency of peptide generation also by inducing the expression of activator PA28 that associates with the proteasome and alters its proteolytic cleavage preference. Up-regulates as well MHC II complexes on the cell surface by promoting expression of several key molecules such as cathepsins B/CTSB, H/CTSH, and L/CTSL. Participates in the regulation of hematopoietic stem cells during development and under homeostatic conditions by affecting their development, quiescence, and differentiation. This Cercocebus atys (Sooty mangabey) protein is Interferon gamma (IFNG).